We begin with the raw amino-acid sequence, 280 residues long: Phosphatidylserine decarboxylase proenzyme (280 aa).

Catalysis depends on charge relay system; for autoendoproteolytic cleavage activity residues Asp88, His144, and Ser247. Ser247 functions as the Schiff-base intermediate with substrate; via pyruvic acid; for decarboxylase activity in the catalytic mechanism. Ser247 carries the post-translational modification Pyruvic acid (Ser); by autocatalysis.

It belongs to the phosphatidylserine decarboxylase family. PSD-B subfamily. Prokaryotic type I sub-subfamily. As to quaternary structure, heterodimer of a large membrane-associated beta subunit and a small pyruvoyl-containing alpha subunit. The cofactor is pyruvate. Post-translationally, is synthesized initially as an inactive proenzyme. Formation of the active enzyme involves a self-maturation process in which the active site pyruvoyl group is generated from an internal serine residue via an autocatalytic post-translational modification. Two non-identical subunits are generated from the proenzyme in this reaction, and the pyruvate is formed at the N-terminus of the alpha chain, which is derived from the carboxyl end of the proenzyme. The autoendoproteolytic cleavage occurs by a canonical serine protease mechanism, in which the side chain hydroxyl group of the serine supplies its oxygen atom to form the C-terminus of the beta chain, while the remainder of the serine residue undergoes an oxidative deamination to produce ammonia and the pyruvoyl prosthetic group on the alpha chain. During this reaction, the Ser that is part of the protease active site of the proenzyme becomes the pyruvoyl prosthetic group, which constitutes an essential element of the active site of the mature decarboxylase.

The protein localises to the cell membrane. It catalyses the reaction a 1,2-diacyl-sn-glycero-3-phospho-L-serine + H(+) = a 1,2-diacyl-sn-glycero-3-phosphoethanolamine + CO2. It functions in the pathway phospholipid metabolism; phosphatidylethanolamine biosynthesis; phosphatidylethanolamine from CDP-diacylglycerol: step 2/2. In terms of biological role, catalyzes the formation of phosphatidylethanolamine (PtdEtn) from phosphatidylserine (PtdSer). This is Phosphatidylserine decarboxylase proenzyme from Stenotrophomonas maltophilia (strain R551-3).